Consider the following 224-residue polypeptide: Urease accessory protein UreF (224 aa).

Belongs to the UreF family. In terms of assembly, ureD, UreF and UreG form a complex that acts as a GTP-hydrolysis-dependent molecular chaperone, activating the urease apoprotein by helping to assemble the nickel containing metallocenter of UreC. The UreE protein probably delivers the nickel.

Its subcellular location is the cytoplasm. Its function is as follows. Required for maturation of urease via the functional incorporation of the urease nickel metallocenter. The protein is Urease accessory protein UreF of Azotobacter vinelandii (strain DJ / ATCC BAA-1303).